Reading from the N-terminus, the 239-residue chain is Lactate utilization protein A (239 aa).

This sequence belongs to the LutA/YkgE family.

In terms of biological role, is involved in L-lactate degradation and allows cells to grow with lactate as the sole carbon source. The protein is Lactate utilization protein A of Bacillus cytotoxicus (strain DSM 22905 / CIP 110041 / 391-98 / NVH 391-98).